The sequence spans 165 residues: Bark lectin isoform 2 (165 aa).

Asn27 and Asn57 each carry an N-linked (GlcNAc...) asparagine glycan. 2 disulfides stabilise this stretch: Cys33-Cys80 and Cys126-Cys133.

Belongs to the protease inhibitor I3 (leguminous Kunitz-type inhibitor) family. As to quaternary structure, dimer.

Its function is as follows. Glucose and N-acetylglucosamine binding lectin. Has hemagglutinating activity against human and rabbit erythrocytes which does not require divalent cations. Inhibits factor Xa and, to a lesser extent, trypsin. Does not inhibit neutrophil elastase, human plasma kallikrein, papain, human plasmin, porcine pancreatic kallikrein and bovin chymotrypsin. Has insecticidal activity against the termite species N.corniger. Induces apoptosis in prostrate cancer cell lines DU145 and PC3. The chain is Bark lectin isoform 2 from Crateva tapia (Garlic-pear tree).